Reading from the N-terminus, the 142-residue chain is Serine/threonine-protein kinase BtrW (142 aa).

This sequence belongs to the anti-sigma-factor family. As to quaternary structure, probably able to multimerize; interacts with BtrV.

It catalyses the reaction L-seryl-[protein] + ATP = O-phospho-L-seryl-[protein] + ADP + H(+). It carries out the reaction L-threonyl-[protein] + ATP = O-phospho-L-threonyl-[protein] + ADP + H(+). Possible negative regulator of sigma-B activity. Phosphorylates and inactivates its specific antagonist protein, BtrV. Upon phosphorylation of BtrV, BtrW is released and binds to an unknown partner(s) that might be sigma-B, thereby blocking its ability to form a complex with its partner (possibly an RNA polymerase holoenzyme (E-sigma-B)). Involved in type III secretion system (T3SS). Phosphorylates BtrV. This chain is Serine/threonine-protein kinase BtrW (btrW), found in Bordetella bronchiseptica (strain ATCC BAA-588 / NCTC 13252 / RB50) (Alcaligenes bronchisepticus).